Reading from the N-terminus, the 130-residue chain is Small ribosomal subunit protein uS9 (130 aa).

Belongs to the universal ribosomal protein uS9 family.

This is Small ribosomal subunit protein uS9 from Bacillus velezensis (strain DSM 23117 / BGSC 10A6 / LMG 26770 / FZB42) (Bacillus amyloliquefaciens subsp. plantarum).